The primary structure comprises 419 residues: Aminoacyltransferase FemB (419 aa).

Belongs to the FemABX family. Homodimer. Interacts with FemA.

It localises to the cytoplasm. The catalysed reaction is MurNAc-L-Ala-D-isoglutaminyl-L-Lys-(N(6)-tri-Gly)-D-Ala-D-Ala-diphospho-di-trans,octa-cis-undecaprenyl-GlcNAc + 2 glycyl-tRNA(Gly) = MurNAc-L-Ala-D-isoglutaminyl-L-Lys-(N(6)-penta-Gly)-D-Ala-D-Ala-diphospho-di-trans,octa-cis-undecaprenyl-GlcNAc + 2 tRNA(Gly) + 2 H(+). Its function is as follows. Catalyzes the formation of the pentaglycine interpeptide bridge, which is characteristic of the S.aureus peptidoglycan. Adds glycines 4 and 5 of the pentaglycine bridge, using glycyl-tRNA(Gly) as donor. Involved in resistance to methicillin. In Staphylococcus aureus (strain NCTC 8325 / PS 47), this protein is Aminoacyltransferase FemB (femB).